The following is a 73-amino-acid chain: Putative membrane protein insertion efficiency factor (73 aa).

This sequence belongs to the UPF0161 family.

It is found in the cell inner membrane. Could be involved in insertion of integral membrane proteins into the membrane. The sequence is that of Putative membrane protein insertion efficiency factor from Phocaeicola vulgatus (strain ATCC 8482 / DSM 1447 / JCM 5826 / CCUG 4940 / NBRC 14291 / NCTC 11154) (Bacteroides vulgatus).